Consider the following 326-residue polypeptide: MNIWQSTSIITWLLAPFSLLFWLVSQIRLFLFRKKILKSYRSPVPVLVVGNISVGGNGKTPVVVWLVEQLQQRGVKVGVISRGYGGKSKDFPQLVTNQSSAEMVGDEPVLIVQRTGVPLAISANRQQSIELLLNQFKLDLIVTDDGLQHYALQRDIEWVVVDGIRRFGNGFVLPAGGLRELPSRLQSVQAIICNGGKAQPNEHLMTLEPEFAVNLRTGEQKPITDFIGQECVAIAGIGHPPRFFNMLENLGVKLLKTQGFADHQAFEPAQLKALAAEQIPLLMTEKDAVKCRTFAQQNWWYVPVSAKFSPESTACLLEPILKRLGK.

Residue 53 to 60 participates in ATP binding; that stretch reads SVGGNGKT.

Belongs to the LpxK family.

The enzyme catalyses a lipid A disaccharide + ATP = a lipid IVA + ADP + H(+). It functions in the pathway glycolipid biosynthesis; lipid IV(A) biosynthesis; lipid IV(A) from (3R)-3-hydroxytetradecanoyl-[acyl-carrier-protein] and UDP-N-acetyl-alpha-D-glucosamine: step 6/6. In terms of biological role, transfers the gamma-phosphate of ATP to the 4'-position of a tetraacyldisaccharide 1-phosphate intermediate (termed DS-1-P) to form tetraacyldisaccharide 1,4'-bis-phosphate (lipid IVA). The chain is Tetraacyldisaccharide 4'-kinase from Actinobacillus pleuropneumoniae serotype 5b (strain L20).